A 332-amino-acid chain; its full sequence is Ribosomal RNA small subunit methyltransferase C (332 aa).

Belongs to the methyltransferase superfamily. RsmC family. As to quaternary structure, monomer.

The protein resides in the cytoplasm. It catalyses the reaction guanosine(1207) in 16S rRNA + S-adenosyl-L-methionine = N(2)-methylguanosine(1207) in 16S rRNA + S-adenosyl-L-homocysteine + H(+). Its function is as follows. Specifically methylates the guanine in position 1207 of 16S rRNA in the 30S particle. The chain is Ribosomal RNA small subunit methyltransferase C from Pseudomonas putida (strain GB-1).